Consider the following 581-residue polypeptide: Proline--tRNA ligase (581 aa).

This sequence belongs to the class-II aminoacyl-tRNA synthetase family. ProS type 1 subfamily. In terms of assembly, homodimer.

The protein localises to the cytoplasm. It carries out the reaction tRNA(Pro) + L-proline + ATP = L-prolyl-tRNA(Pro) + AMP + diphosphate. Functionally, catalyzes the attachment of proline to tRNA(Pro) in a two-step reaction: proline is first activated by ATP to form Pro-AMP and then transferred to the acceptor end of tRNA(Pro). As ProRS can inadvertently accommodate and process non-cognate amino acids such as alanine and cysteine, to avoid such errors it has two additional distinct editing activities against alanine. One activity is designated as 'pretransfer' editing and involves the tRNA(Pro)-independent hydrolysis of activated Ala-AMP. The other activity is designated 'posttransfer' editing and involves deacylation of mischarged Ala-tRNA(Pro). The misacylated Cys-tRNA(Pro) is not edited by ProRS. The polypeptide is Proline--tRNA ligase (Blochmanniella pennsylvanica (strain BPEN)).